The sequence spans 424 residues: MTLLALGINHKTATIEVREQVAFTPAELAGALAELKSLPGVNEAAVLSTCNRTELYCVTDSQGEREVLDWLGRFHALPPETLMQSAYHYLDGEAARHLMRVAAGLDSMVLGEPQILGQLKEAYQLARDNAGLGGELERLFQHTFSVAKQVRSETGIGENPVSVAYAAVSLASHIFDDFGRARALLIGAGETIELVARHLREAGIRGLTVANRTRERAELLAHEVDAEAISLGEIPQALAHADIIISSTASPLPILGKGMVESALKKRRHRPMFMVDIAVPRDIESQVGELDDVFLYSVDDLQEVIEENRKQRAVAAAQAESLIEHGIQHWQHERRVRGAGDLIRRYREQGEALREEAERQALAQLARGEDPEKVLQRLSRQLTNKLLHGPTLRLREASGEARHDILKAADTLLIDPAASTQDSA.

Residues threonine 49–arginine 52, serine 107, glutamate 112–glutamine 114, and glutamine 118 contribute to the substrate site. Cysteine 50 acts as the Nucleophile in catalysis. Glycine 187–isoleucine 192 is a binding site for NADP(+).

Belongs to the glutamyl-tRNA reductase family. In terms of assembly, homodimer.

It carries out the reaction (S)-4-amino-5-oxopentanoate + tRNA(Glu) + NADP(+) = L-glutamyl-tRNA(Glu) + NADPH + H(+). It participates in porphyrin-containing compound metabolism; protoporphyrin-IX biosynthesis; 5-aminolevulinate from L-glutamyl-tRNA(Glu): step 1/2. Functionally, catalyzes the NADPH-dependent reduction of glutamyl-tRNA(Glu) to glutamate 1-semialdehyde (GSA). In Chromohalobacter salexigens (strain ATCC BAA-138 / DSM 3043 / CIP 106854 / NCIMB 13768 / 1H11), this protein is Glutamyl-tRNA reductase.